We begin with the raw amino-acid sequence, 120 residues long: Large ribosomal subunit protein uL18 (120 aa).

The protein belongs to the universal ribosomal protein uL18 family. In terms of assembly, part of the 50S ribosomal subunit; part of the 5S rRNA/L5/L18/L25 subcomplex. Contacts the 5S and 23S rRNAs.

This is one of the proteins that bind and probably mediate the attachment of the 5S RNA into the large ribosomal subunit, where it forms part of the central protuberance. This chain is Large ribosomal subunit protein uL18, found in Bacillus cytotoxicus (strain DSM 22905 / CIP 110041 / 391-98 / NVH 391-98).